Consider the following 471-residue polypeptide: Iroquois-class homeodomain protein IRX-2 (471 aa).

The segment at residues 112–175 is a DNA-binding region (homeobox; TALE-type); that stretch reads LNDPAYRKNA…ANARRRLKKE (64 aa). Disordered regions lie at residues 176–373 and 424–471; these read NKMT…SPYP and APKA…QPYL. A Phosphoserine modification is found at serine 186. The span at 195-209 shows a compositional bias: basic and acidic residues; the sequence is DATRSKDESPDKAQE. The span at 261 to 273 shows a compositional bias: acidic residues; that stretch reads DDLEDDEDDDEEG. Residues 355 to 367 are compositionally biased toward low complexity; the sequence is PAAAAPASTGAPP. Over residues 462 to 471 the composition is skewed to gly residues; it reads VVGGGVQPYL.

This sequence belongs to the TALE/IRO homeobox family.

Its subcellular location is the nucleus. In Homo sapiens (Human), this protein is Iroquois-class homeodomain protein IRX-2 (IRX2).